Here is a 179-residue protein sequence, read N- to C-terminus: MSSRVLTPDVVGIDALIHDHQTVLAKAEGGVVAVFANNAPAFYAVTPARLAELLALEEKLARPGSDVALDDQLYQEPQAAPVAVPMGKFAMYPDWQPDTDFIRQAALWGVALREPVTAEELASFIAYWQAEGKVFHHVQWQQKLARSLQIGRASNGGLPKRDVNTVSEPDSQIPPGFRG.

The tract at residues 154 to 179 is disordered; it reads SNGGLPKRDVNTVSEPDSQIPPGFRG.

Belongs to the DnaT family. Homooligomerizes. Interacts with PriB. Component of the replication restart primosome. Primosome assembly occurs via a 'hand-off' mechanism. PriA binds to replication forks, subsequently PriB then DnaT bind; DnaT then displaces ssDNA to generate the helicase loading substrate.

Its function is as follows. Involved in the restart of stalled replication forks, which reloads the replicative helicase on sites other than the origin of replication. Can function in multiple replication restart pathways. Displaces ssDNA from a PriB-ssDNA complex. Probably forms a spiral filament on ssDNA. The sequence is that of Replication restart protein DnaT from Escherichia coli O127:H6 (strain E2348/69 / EPEC).